The primary structure comprises 183 residues: Beta-defensin 129 (183 aa).

The first 19 residues, 1-19, serve as a signal peptide directing secretion; that stretch reads MKLLFPVFASLMLQYQVNT. Cystine bridges form between Cys-27/Cys-53, Cys-34/Cys-48, and Cys-38/Cys-54. Residues 141-183 form a disordered region; that stretch reads TATSTKSNTKESRDSATASPPPAPPPPNILPTPSLELEKAEEQ. The span at 159–170 shows a compositional bias: pro residues; sequence SPPPAPPPPNIL.

It belongs to the beta-defensin family.

Its subcellular location is the secreted. Functionally, has antibacterial activity. This chain is Beta-defensin 129 (DEFB129), found in Pongo pygmaeus (Bornean orangutan).